Here is a 74-residue protein sequence, read N- to C-terminus: MFDVKAWAVYIVEWAAKDPYGFLTTVILVLTPLFIISAALSWKLAKMIETREREQKKKRKRQENIVKAKRAKKD.

Residues 20 to 40 form a helical membrane-spanning segment; it reads YGFLTTVILVLTPLFIISAAL. Positions 48-74 form a coiled coil; that stretch reads IETREREQKKKRKRQENIVKAKRAKKD. The segment at 53 to 74 is disordered; sequence REQKKKRKRQENIVKAKRAKKD. Basic residues predominate over residues 56–74; the sequence is KKKRKRQENIVKAKRAKKD.

This sequence belongs to the SMIM15 family.

The protein localises to the membrane. The chain is Small integral membrane protein 15 (SMIM15) from Gallus gallus (Chicken).